Here is a 671-residue protein sequence, read N- to C-terminus: DNA ligase (671 aa).

NAD(+)-binding positions include 32-36, 81-82, and E113; these read DAEYD and SL. K115 acts as the N6-AMP-lysine intermediate in catalysis. NAD(+)-binding residues include R136, E173, K290, and K314. 4 residues coordinate Zn(2+): C408, C411, C426, and C432. A BRCT domain is found at 593–671; sequence EIDSPFAGKT…ETEMLRLLGS (79 aa).

This sequence belongs to the NAD-dependent DNA ligase family. LigA subfamily. It depends on Mg(2+) as a cofactor. Requires Mn(2+) as cofactor.

It carries out the reaction NAD(+) + (deoxyribonucleotide)n-3'-hydroxyl + 5'-phospho-(deoxyribonucleotide)m = (deoxyribonucleotide)n+m + AMP + beta-nicotinamide D-nucleotide.. In terms of biological role, DNA ligase that catalyzes the formation of phosphodiester linkages between 5'-phosphoryl and 3'-hydroxyl groups in double-stranded DNA using NAD as a coenzyme and as the energy source for the reaction. It is essential for DNA replication and repair of damaged DNA. The chain is DNA ligase from Escherichia coli O6:H1 (strain CFT073 / ATCC 700928 / UPEC).